A 636-amino-acid polypeptide reads, in one-letter code: Poly(3-hydroxyalkanoate) polymerase subunit PhaC (636 aa).

Disordered stretches follow at residues 1–38 (MYNKRIKRVLPPEEMVTDSKQESGGQKNGDKTGFDATD) and 129–152 (QGTRGMQGEPLPPEPDTRKDKRFS). Residues 143-152 (PDTRKDKRFS) show a composition bias toward basic and acidic residues. C373 is an active-site residue.

The protein belongs to the PHA/PHB synthase family. Type I PhaC subfamily.

The protein localises to the cytoplasm. It catalyses the reaction (3R)-3-hydroxybutanoyl-CoA + [(3R)-hydroxybutanoate](n) = [(3R)-hydroxybutanoate](n+1) + CoA. It functions in the pathway biopolymer metabolism; poly-(R)-3-hydroxybutanoate biosynthesis. In terms of biological role, polymerizes D(-)-3-hydroxybutyryl-CoA to create PHB which consists of thousands of hydroxybutyrate molecules linked end to end. PHB serves as an intracellular energy reserve material when cells grow under conditions of nutrient limitation. In Rhizobium etli (strain ATCC 51251 / DSM 11541 / JCM 21823 / NBRC 15573 / CFN 42), this protein is Poly(3-hydroxyalkanoate) polymerase subunit PhaC.